Reading from the N-terminus, the 410-residue chain is Cytochrome P450 105A3 (410 aa).

Heme is bound at residue cysteine 359.

This sequence belongs to the cytochrome P450 family. As to quaternary structure, monomer. The cofactor is heme.

Catalyzes the hydroxylation of sodium ML-236B carboxylate to pravastatin. This Streptomyces carbophilus protein is Cytochrome P450 105A3 (cyp105A3).